We begin with the raw amino-acid sequence, 223 residues long: UPF0319 protein VPA1584 (223 aa).

The first 21 residues, 1-21 (MKLIKPLTCALALAMSGMAFA), serve as a signal peptide directing secretion.

This sequence belongs to the UPF0319 family.

The polypeptide is UPF0319 protein VPA1584 (Vibrio parahaemolyticus serotype O3:K6 (strain RIMD 2210633)).